We begin with the raw amino-acid sequence, 122 residues long: S-adenosylmethionine decarboxylase proenzyme (122 aa).

Catalysis depends on Ser63, which acts as the Schiff-base intermediate with substrate; via pyruvic acid. Ser63 bears the Pyruvic acid (Ser); by autocatalysis mark. His68 acts as the Proton acceptor; for processing activity in catalysis. The Proton donor; for catalytic activity role is filled by Cys83.

The protein belongs to the prokaryotic AdoMetDC family. Type 1 subfamily. Heterotetramer of two alpha and two beta chains arranged as a dimer of alpha/beta heterodimers. Requires pyruvate as cofactor. Is synthesized initially as an inactive proenzyme. Formation of the active enzyme involves a self-maturation process in which the active site pyruvoyl group is generated from an internal serine residue via an autocatalytic post-translational modification. Two non-identical subunits are generated from the proenzyme in this reaction, and the pyruvate is formed at the N-terminus of the alpha chain, which is derived from the carboxyl end of the proenzyme. The post-translation cleavage follows an unusual pathway, termed non-hydrolytic serinolysis, in which the side chain hydroxyl group of the serine supplies its oxygen atom to form the C-terminus of the beta chain, while the remainder of the serine residue undergoes an oxidative deamination to produce ammonia and the pyruvoyl group blocking the N-terminus of the alpha chain.

It catalyses the reaction S-adenosyl-L-methionine + H(+) = S-adenosyl 3-(methylsulfanyl)propylamine + CO2. Its pathway is amine and polyamine biosynthesis; S-adenosylmethioninamine biosynthesis; S-adenosylmethioninamine from S-adenosyl-L-methionine: step 1/1. In terms of biological role, catalyzes the decarboxylation of S-adenosylmethionine to S-adenosylmethioninamine (dcAdoMet), the propylamine donor required for the synthesis of the polyamines spermine and spermidine from the diamine putrescine. In Methanococcus maripaludis (strain C7 / ATCC BAA-1331), this protein is S-adenosylmethionine decarboxylase proenzyme.